The chain runs to 201 residues: Small ribosomal subunit protein uS4c (201 aa).

Positions 20-43 are disordered; sequence GLTNKRPKSRNDPTNQSSSRKISQ. Residues 31–41 are compositionally biased toward polar residues; the sequence is DPTNQSSSRKI. The S4 RNA-binding domain occupies 89 to 157; sequence MRLDNIIFRL…IGKNLDLSQK (69 aa).

The protein belongs to the universal ribosomal protein uS4 family. In terms of assembly, part of the 30S ribosomal subunit. Contacts protein S5. The interaction surface between S4 and S5 is involved in control of translational fidelity.

Its subcellular location is the plastid. The protein resides in the chloroplast. One of the primary rRNA binding proteins, it binds directly to 16S rRNA where it nucleates assembly of the body of the 30S subunit. In terms of biological role, with S5 and S12 plays an important role in translational accuracy. This is Small ribosomal subunit protein uS4c (rps4) from Cycas taitungensis (Prince sago).